Reading from the N-terminus, the 756-residue chain is Serine/threonine-protein kinase DCLK2 (756 aa).

Positions 1–44 (MASTRSIELEHFEERDKRPRPGSRRGAPSSSGGSSISGPKGNGL) are disordered. The segment covering 7-19 (IELEHFEERDKRP) has biased composition (basic and acidic residues). Over residues 24–43 (RRGAPSSSGGSSISGPKGNG) the composition is skewed to low complexity. T61 is modified (phosphothreonine). Doublecortin domains lie at 72-158 (KKAR…VDYT) and 196-279 (KLVT…AQDD). 2 stretches are compositionally biased toward low complexity: residues 301–311 (KYSGSRSPGFS) and 323–346 (TPSSQLSTPKSTKSSSSSPTSPGS). The segment at 301-375 (KYSGSRSPGF…GPELDRCLSP (75 aa)) is disordered. Residues 353-364 (ISAQGRSSSNVN) are compositionally biased toward polar residues. Residue S361 is modified to Phosphoserine. Residues 393–650 (YRIGKVIGDG…AGEILSHPWV (258 aa)) enclose the Protein kinase domain. ATP is bound by residues 399–407 (IGDGNFAVV) and K422. The active-site Proton acceptor is D514. Position 646 is a phosphoserine (S646). T665 bears the Phosphothreonine mark. The segment at 707–756 (QDSSRPSREQTSPVPPSAQEAPPPLESPRPPGPPATSGCDLAGTWRRHRD) is disordered. Pro residues predominate over residues 719 to 740 (PVPPSAQEAPPPLESPRPPGPP).

It belongs to the protein kinase superfamily. CAMK Ser/Thr protein kinase family. CaMK subfamily. As to quaternary structure, binds to and stabilizes microtubules. Interacts with MAPK8IP1/JIP-1, MAPK8IP2/JIP-2, MAPK9/JNK2, PPP1R9B/NEURABIN-2 and actin. Post-translationally, autophosphorylated. As to expression, expressed in the central and peripheral nervous system including the brain, spinal cord, cranial and dorsal root ganglia and in the parasympathetic ganglia. Present in neurons, but not in glial cells, in most forebrain areas. Strong expression in the hippocampal CA1 pyramidal cell layer. Expressed in the photoreceptor sensory cilium complex and in eyes. Also detected in individual cells of the olfactory epithelium.

Its subcellular location is the cytoplasm. The protein resides in the cytoskeleton. It carries out the reaction L-seryl-[protein] + ATP = O-phospho-L-seryl-[protein] + ADP + H(+). It catalyses the reaction L-threonyl-[protein] + ATP = O-phospho-L-threonyl-[protein] + ADP + H(+). Protein kinase with a significantly reduced Ca(2+)+/CAM affinity and dependence compared to other members of the CaMK family. May play a role in the down-regulation of CRE-dependent gene activation probably by phosphorylation of the CREB coactivator CRTC2/TORC2 and the resulting retention of TORC2 in the cytoplasm. The polypeptide is Serine/threonine-protein kinase DCLK2 (Dclk2) (Mus musculus (Mouse)).